The sequence spans 185 residues: Elongation factor P (185 aa).

Belongs to the elongation factor P family.

Its subcellular location is the cytoplasm. Its pathway is protein biosynthesis; polypeptide chain elongation. Its function is as follows. Involved in peptide bond synthesis. Stimulates efficient translation and peptide-bond synthesis on native or reconstituted 70S ribosomes in vitro. Probably functions indirectly by altering the affinity of the ribosome for aminoacyl-tRNA, thus increasing their reactivity as acceptors for peptidyl transferase. The chain is Elongation factor P from Alkaliphilus metalliredigens (strain QYMF).